The primary structure comprises 300 residues: Probable protein phosphatase 2C 3 (300 aa).

The 276-residue stretch at 23–298 (IFAASEMQGW…DNMTTILVYL (276 aa)) folds into the PPM-type phosphatase domain. Mn(2+)-binding residues include Asp-57, Gly-58, Asp-237, and Asp-289.

It belongs to the PP2C family. Mg(2+) is required as a cofactor. It depends on Mn(2+) as a cofactor.

The protein resides in the membrane. The enzyme catalyses O-phospho-L-seryl-[protein] + H2O = L-seryl-[protein] + phosphate. It carries out the reaction O-phospho-L-threonyl-[protein] + H2O = L-threonyl-[protein] + phosphate. In terms of biological role, enzyme with a broad specificity. This Paramecium tetraurelia protein is Probable protein phosphatase 2C 3.